We begin with the raw amino-acid sequence, 169 residues long: Ribosome maturation factor RimM (169 aa).

The PRC barrel domain maps to 94–168 (DDEFYHADLI…RIVADPPEGL (75 aa)).

This sequence belongs to the RimM family. As to quaternary structure, binds ribosomal protein uS19.

The protein resides in the cytoplasm. Its function is as follows. An accessory protein needed during the final step in the assembly of 30S ribosomal subunit, possibly for assembly of the head region. Essential for efficient processing of 16S rRNA. May be needed both before and after RbfA during the maturation of 16S rRNA. It has affinity for free ribosomal 30S subunits but not for 70S ribosomes. The chain is Ribosome maturation factor RimM from Cereibacter sphaeroides (strain ATCC 17029 / ATH 2.4.9) (Rhodobacter sphaeroides).